Here is a 307-residue protein sequence, read N- to C-terminus: Bifunctional protein FolD 3 (307 aa).

Residues 169 to 171 (GRS), S194, and I235 contribute to the NADP(+) site.

The protein belongs to the tetrahydrofolate dehydrogenase/cyclohydrolase family. In terms of assembly, homodimer.

The catalysed reaction is (6R)-5,10-methylene-5,6,7,8-tetrahydrofolate + NADP(+) = (6R)-5,10-methenyltetrahydrofolate + NADPH. It carries out the reaction (6R)-5,10-methenyltetrahydrofolate + H2O = (6R)-10-formyltetrahydrofolate + H(+). The protein operates within one-carbon metabolism; tetrahydrofolate interconversion. Catalyzes the oxidation of 5,10-methylenetetrahydrofolate to 5,10-methenyltetrahydrofolate and then the hydrolysis of 5,10-methenyltetrahydrofolate to 10-formyltetrahydrofolate. The protein is Bifunctional protein FolD 3 of Ectopseudomonas mendocina (strain ymp) (Pseudomonas mendocina).